The chain runs to 258 residues: Thiazole synthase (258 aa).

The active-site Schiff-base intermediate with DXP is the Lys-98. 1-deoxy-D-xylulose 5-phosphate is bound by residues Gly-159, 185-186, and 207-208; these read AG and NT.

Belongs to the ThiG family. As to quaternary structure, homotetramer. Forms heterodimers with either ThiH or ThiS.

It is found in the cytoplasm. The enzyme catalyses [ThiS sulfur-carrier protein]-C-terminal-Gly-aminoethanethioate + 2-iminoacetate + 1-deoxy-D-xylulose 5-phosphate = [ThiS sulfur-carrier protein]-C-terminal Gly-Gly + 2-[(2R,5Z)-2-carboxy-4-methylthiazol-5(2H)-ylidene]ethyl phosphate + 2 H2O + H(+). It functions in the pathway cofactor biosynthesis; thiamine diphosphate biosynthesis. Functionally, catalyzes the rearrangement of 1-deoxy-D-xylulose 5-phosphate (DXP) to produce the thiazole phosphate moiety of thiamine. Sulfur is provided by the thiocarboxylate moiety of the carrier protein ThiS. In vitro, sulfur can be provided by H(2)S. This chain is Thiazole synthase, found in Bacillus cereus (strain ZK / E33L).